The primary structure comprises 283 residues: Probable protein phosphatase 2C 58 (283 aa).

Positions 35 to 282 (THGFHCVKGK…DDISCIVVKF (248 aa)) constitute a PPM-type phosphatase domain. 4 residues coordinate Mn(2+): Asp-72, Gly-73, Asp-234, and Asp-273.

This sequence belongs to the PP2C family. Mg(2+) is required as a cofactor. Requires Mn(2+) as cofactor.

It catalyses the reaction O-phospho-L-seryl-[protein] + H2O = L-seryl-[protein] + phosphate. The enzyme catalyses O-phospho-L-threonyl-[protein] + H2O = L-threonyl-[protein] + phosphate. The protein is Probable protein phosphatase 2C 58 of Arabidopsis thaliana (Mouse-ear cress).